The chain runs to 373 residues: MTDNSKTRVVVGMSGGVDSSVTALLLKEQGYDVIGVFMKNWDDTDEFGVCTATEDYKDVAAVADQIDIPYYSVNFEKEYWDRVFEYFLAEYRAGRTPNPDVMCNKEIKFKAFLDYAMTLGADYVATGHYAQVVRDEDGIVHMLRGADNNKDQTYFLSQLSQEQLQKTMFPLGHLQKPEVREIAERAGLATAKKKDSTGICFIGEKNFKEFLSQYLPAQKGRMMTIDGRDMGEHNGLMYYTIGQRGGMGIGGQKGGDNAPWFVVGKDLSKNILYVGQGFHHESLMSTSLDASMIHFTRDMPEEFEMECTAKFRYRQPDSKVTVKVKGDKSEVIFAEPQRAITPGQAVVFYDGQECLGGGIIDQAYKDGKVCQYI.

ATP-binding positions include 12 to 19 and M38; that span reads GMSGGVDS. Positions 98–100 are interaction with target base in tRNA; that stretch reads NPD. C103 serves as the catalytic Nucleophile. C103 and C200 are disulfide-bonded. G127 provides a ligand contact to ATP. Positions 150–152 are interaction with tRNA; it reads KDQ. C200 serves as the catalytic Cysteine persulfide intermediate. The tract at residues 312-313 is interaction with tRNA; it reads RY.

This sequence belongs to the MnmA/TRMU family.

The protein resides in the cytoplasm. It catalyses the reaction S-sulfanyl-L-cysteinyl-[protein] + uridine(34) in tRNA + AH2 + ATP = 2-thiouridine(34) in tRNA + L-cysteinyl-[protein] + A + AMP + diphosphate + H(+). In terms of biological role, catalyzes the 2-thiolation of uridine at the wobble position (U34) of tRNA, leading to the formation of s(2)U34. In Streptococcus thermophilus (strain CNRZ 1066), this protein is tRNA-specific 2-thiouridylase MnmA.